Here is a 307-residue protein sequence, read N- to C-terminus: Barttin (307 aa).

Residues 1–5 (MADEK) lie on the Cytoplasmic side of the membrane. Residues 1–72 (MADEKTFRIG…VPADSDFQGI (72 aa)) form a regulates channel membrane trafficking and anion conductance region. Residues 6–26 (TFRIGFIVLGLFLLSLGTFLM) form a helical membrane-spanning segment. The Extracellular segment spans residues 27–32 (SHDRPQ). Residues 33–53 (VYGTFYAMGSVMVIGGVIWSM) traverse the membrane as a helical segment. 2 S-palmitoyl cysteine lipidation sites follow: C54 and C56. Residues 54–307 (CQCYPKITFV…ELGFEPDIQG (254 aa)) are Cytoplasmic-facing. A phosphoserine mark is found at S79 and S107. Disordered regions lie at residues 135-154 (TGAS…WMEA) and 161-224 (GSDE…RGPL). Over residues 161–171 (GSDENEGEKSH) the composition is skewed to basic and acidic residues. S162 is modified (phosphoserine). Residues 172–183 (SQSSPSVGPQGS) show a composition bias toward low complexity. Residues 198–207 (SEGSSLQPSP) are compositionally biased toward polar residues. Phosphoserine is present on residues S228 and S289. Residues 255–307 (RKQQWSLRMKGETVQARAEEPEQEEEDLYYGLPDSPGNPLPDKELGFEPDIQG) are disordered.

In terms of assembly, interacts with CLCNK channels. Forms probably heteromers with CLCNKA in the thin ascending limb of Henle and with CLCNKB in the thick ascending limb and more distal segments. Palmitoylation is necessary for activation of plasma membrane-inserted CLC-K/barttin channels. In terms of tissue distribution, expression is evident in inner and outer stripes of the outer medulla of the kidney, most probably representing thin limbs of Henle's loop together with some collecting duct coursing through the outer stripe. In situ hybridization in fetal kidney at 18.5 dpc revealed a clear continuity between hybridization signals from the thin limb of Henle's loop and the distal convoluted tubule, suggesting that part of the expression pattern may result from expression in the thick ascending limb of Henle's loop. In addition, strong signals are present in a subset of cortical tubules, representing distal convoluted tubules or cortical collecting duct. Strong expression is also observed in the inner medulla of the kidney. This expression does not extend all the way to the tip of the papilla. Thus this signal most probably represents cells of the thin ascending limbs. In the inner ear, strong and exclusive expression is detected in marginal cells of the stria vascularis. In addition to cochlear signal, expression is observed in dark cells localized at the base of the crista ampullaris of the vestibular organ.

The protein resides in the basolateral cell membrane. In terms of biological role, regulatory subunit of anion-selective CLCNKA:BSND and CLCNKB:BSND heteromeric channels involved in basolateral chloride conductance along the nephron to achieve urine concentration and maintain systemic acid-base homeostasis, and in the stria vascularis of the inner ear to establish the endocochlear potential necessary for normal hearing. Most likely acts as a chaperone that allosterically regulates proper sorting of CLCNKA:BSND and CLCNKB:BSND channels at the basolateral plasma membrane domain and functional switch to ion conducting state. Mediates constitutive opening of channel common gates. This is Barttin from Mus musculus (Mouse).